The sequence spans 179 residues: Gene 49 protein (179 aa).

2 disordered regions span residues 1–38 (MKGNQLSYDDPWSTAPAQPEPAPAPEPETAPSATVTTA) and 102–137 (HYAGSGGSAPANGGGGGQQQSRAPQAAQEAPGGEKR). Pro residues predominate over residues 18 to 28 (QPEPAPAPEPE). Positions 29–38 (TAPSATVTTA) are enriched in low complexity. Gly residues predominate over residues 104–119 (AGSGGSAPANGGGGGQ). The span at 120–132 (QQSRAPQAAQEAP) shows a compositional bias: low complexity.

The protein is Gene 49 protein (49) of Mycobacterium (Mycobacteriophage L5).